A 481-amino-acid chain; its full sequence is UDP-N-acetylmuramate--L-alanine ligase (481 aa).

135-141 is a binding site for ATP; that stretch reads GTHGKTT.

Belongs to the MurCDEF family.

The protein localises to the cytoplasm. The enzyme catalyses UDP-N-acetyl-alpha-D-muramate + L-alanine + ATP = UDP-N-acetyl-alpha-D-muramoyl-L-alanine + ADP + phosphate + H(+). It functions in the pathway cell wall biogenesis; peptidoglycan biosynthesis. In terms of biological role, cell wall formation. In Nostoc punctiforme (strain ATCC 29133 / PCC 73102), this protein is UDP-N-acetylmuramate--L-alanine ligase.